Reading from the N-terminus, the 157-residue chain is Endoribonuclease YbeY (157 aa).

Zn(2+) contacts are provided by His114, His118, and His124.

The protein belongs to the endoribonuclease YbeY family. Zn(2+) is required as a cofactor.

The protein localises to the cytoplasm. Its function is as follows. Single strand-specific metallo-endoribonuclease involved in late-stage 70S ribosome quality control and in maturation of the 3' terminus of the 16S rRNA. The protein is Endoribonuclease YbeY of Yersinia pseudotuberculosis serotype O:1b (strain IP 31758).